Consider the following 687-residue polypeptide: Auxin response factor 14 (687 aa).

The segment at residues 133–235 is a DNA-binding region (TF-B3); the sequence is FCKTLTASDT…QLRLGVRRAV (103 aa).

It belongs to the ARF family. Homo and heterodimers. Expressed in roots, culms, leaves and young panicles.

Its subcellular location is the nucleus. Auxin response factors (ARFs) are transcriptional factors that bind specifically to the DNA sequence 5'-TGTCTC-3' found in the auxin-responsive promoter elements (AuxREs). The protein is Auxin response factor 14 (ARF14) of Oryza sativa subsp. japonica (Rice).